Here is a 141-residue protein sequence, read N- to C-terminus: Hemoglobin subunit alpha (141 aa).

The 141-residue stretch at 1-141 folds into the Globin domain; the sequence is VLSANDKTNV…VSTVLTSKYR (141 aa). Residue Ser-3 is modified to Phosphoserine. N6-succinyllysine is present on Lys-7. Residue Thr-8 is modified to Phosphothreonine. N6-succinyllysine is present on Lys-11. Position 16 is an N6-acetyllysine; alternate (Lys-16). Position 16 is an N6-succinyllysine; alternate (Lys-16). Tyr-24 is modified (phosphotyrosine). Ser-35 is modified (phosphoserine). Lys-40 bears the N6-succinyllysine mark. Ser-49 carries the post-translational modification Phosphoserine. Position 58 (Gln-58) interacts with O2. Heme b is bound at residue His-87. The residue at position 108 (Thr-108) is a Phosphothreonine. 2 positions are modified to phosphoserine: Ser-124 and Ser-131. Phosphothreonine occurs at positions 134 and 137. Ser-138 is modified (phosphoserine).

It belongs to the globin family. Heterotetramer of two alpha chains and two beta chains. In terms of tissue distribution, red blood cells.

Functionally, involved in oxygen transport from the lung to the various peripheral tissues. Hemopressin acts as an antagonist peptide of the cannabinoid receptor CNR1. Hemopressin-binding efficiently blocks cannabinoid receptor CNR1 and subsequent signaling. This is Hemoglobin subunit alpha (HBA) from Didelphis virginiana (North American opossum).